The chain runs to 522 residues: DEAD-box ATP-dependent RNA helicase 1 (522 aa).

Residues 30–59 carry the Q motif motif; the sequence is CALDTLPCLNPKLKKALENMGISSLFPVQV. Residues 66 to 297 enclose the Helicase ATP-binding domain; that stretch reads IGPGGFERDI…QLDLHHPLFM (232 aa). 79 to 86 lines the ATP pocket; it reads SPTGSGKT. The DEAD box motif lies at 207 to 210; the sequence is DETD. The Helicase C-terminal domain maps to 325-475; that stretch reads YLVALLKSWE…PIPPTSLDSI (151 aa). The interval 490 to 522 is disordered; sequence VESEAPKKGRQAFRHNSRTGNSQTKLNKPRSEA. Over residues 497-506 the composition is skewed to basic residues; that stretch reads KGRQAFRHNS.

It belongs to the DEAD box helicase family. DDX51/DBP6 subfamily.

It carries out the reaction ATP + H2O = ADP + phosphate + H(+). The sequence is that of DEAD-box ATP-dependent RNA helicase 1 (RH1) from Arabidopsis thaliana (Mouse-ear cress).